Here is a 328-residue protein sequence, read N- to C-terminus: Biotin synthase (328 aa).

A Radical SAM core domain is found at 41–260; the sequence is TAIETASLLS…VALARILMPA (220 aa). Cys56, Cys60, and Cys63 together coordinate [4Fe-4S] cluster. Residues Cys100, Cys131, Cys191, and Arg264 each coordinate [2Fe-2S] cluster.

Belongs to the radical SAM superfamily. Biotin synthase family. Homodimer. [4Fe-4S] cluster is required as a cofactor. It depends on [2Fe-2S] cluster as a cofactor.

The enzyme catalyses (4R,5S)-dethiobiotin + (sulfur carrier)-SH + 2 reduced [2Fe-2S]-[ferredoxin] + 2 S-adenosyl-L-methionine = (sulfur carrier)-H + biotin + 2 5'-deoxyadenosine + 2 L-methionine + 2 oxidized [2Fe-2S]-[ferredoxin]. The protein operates within cofactor biosynthesis; biotin biosynthesis; biotin from 7,8-diaminononanoate: step 2/2. In terms of biological role, catalyzes the conversion of dethiobiotin (DTB) to biotin by the insertion of a sulfur atom into dethiobiotin via a radical-based mechanism. This is Biotin synthase from Cereibacter sphaeroides (strain ATCC 17023 / DSM 158 / JCM 6121 / CCUG 31486 / LMG 2827 / NBRC 12203 / NCIMB 8253 / ATH 2.4.1.) (Rhodobacter sphaeroides).